We begin with the raw amino-acid sequence, 156 residues long: Small ribosomal subunit protein uS7 (156 aa).

The protein belongs to the universal ribosomal protein uS7 family. In terms of assembly, part of the 30S ribosomal subunit. Contacts proteins S9 and S11.

Functionally, one of the primary rRNA binding proteins, it binds directly to 16S rRNA where it nucleates assembly of the head domain of the 30S subunit. Is located at the subunit interface close to the decoding center, probably blocks exit of the E-site tRNA. The polypeptide is Small ribosomal subunit protein uS7 (Photobacterium profundum (strain SS9)).